A 511-amino-acid chain; its full sequence is cAMP-regulated M3L protein (511 aa).

The protein to D.discoideum protein M3R.

This Dictyostelium discoideum (Social amoeba) protein is cAMP-regulated M3L protein (prtA).